Consider the following 246-residue polypeptide: Type III pantothenate kinase (246 aa).

Aspartate 6–valine 13 is a binding site for ATP. Residue glycine 103 to arginine 106 coordinates substrate. Residue aspartate 105 is the Proton acceptor of the active site. Aspartate 125 is a binding site for K(+). Residue threonine 128 participates in ATP binding. Threonine 179 serves as a coordination point for substrate.

The protein belongs to the type III pantothenate kinase family. As to quaternary structure, homodimer. NH4(+) is required as a cofactor. K(+) serves as cofactor.

Its subcellular location is the cytoplasm. It catalyses the reaction (R)-pantothenate + ATP = (R)-4'-phosphopantothenate + ADP + H(+). It participates in cofactor biosynthesis; coenzyme A biosynthesis; CoA from (R)-pantothenate: step 1/5. Functionally, catalyzes the phosphorylation of pantothenate (Pan), the first step in CoA biosynthesis. This is Type III pantothenate kinase (coaX) from Thermotoga maritima (strain ATCC 43589 / DSM 3109 / JCM 10099 / NBRC 100826 / MSB8).